Consider the following 300-residue polypeptide: MTQEGQLEKRFLDYLHSERNYSEHTSTAYENDLSDFRRFLNEQAIIEYQQVTFLDVRIYLTELKQKSFSRTTVARKISSLRSFYTFLLRENVITENPFTYVSHAKNQLRLPKFFYSEEMEALFQVVYEDNETLTLRDRVILEVLYGTGIRVSECAGIMLSDLDTSYQAILIRGKGNKERYVPFGAYAEDAITDYLSGRIELMTRFKKTHDSLLINHYGDPLTTRGIRYCLTKIISKASLTRKIHPHMLRHTFATDLLNNGADMRTVQELLGHASLSSTQIYTHVTKEHLKSTYMKHHPRA.

One can recognise a Core-binding (CB) domain in the interval 2-88; that stretch reads TQEGQLEKRF…SLRSFYTFLL (87 aa). Residues 109–294 enclose the Tyr recombinase domain; it reads RLPKFFYSEE…TKEHLKSTYM (186 aa). Residues R150, K174, H246, R249, and H272 contribute to the active site. Y281 serves as the catalytic O-(3'-phospho-DNA)-tyrosine intermediate.

It belongs to the 'phage' integrase family. XerC subfamily. Forms a cyclic heterotetrameric complex composed of two molecules of XerC and two molecules of XerD.

The protein resides in the cytoplasm. Functionally, site-specific tyrosine recombinase, which acts by catalyzing the cutting and rejoining of the recombining DNA molecules. The XerC-XerD complex is essential to convert dimers of the bacterial chromosome into monomers to permit their segregation at cell division. It also contributes to the segregational stability of plasmids. The protein is Tyrosine recombinase XerC of Listeria innocua serovar 6a (strain ATCC BAA-680 / CLIP 11262).